A 181-amino-acid chain; its full sequence is D-lyxose/D-mannose isomerase (181 aa).

Mn(2+) is bound by residues H75, H77, E88, and H143.

Belongs to the D-lyxose ketol-isomerase family. Homodimer. It depends on Mn(2+) as a cofactor.

The catalysed reaction is D-lyxose = D-xylulose. The enzyme catalyses D-mannose = D-fructose. Functionally, sugar isomerase that catalyzes the reversible isomerization of D-lyxose to D-xylulose, and D-mannose to D-fructose. Shows optimum activity using D-lyxose as substrate, but can also effectively catalyze the isomerization between D-fructose and D-mannose. The protein is D-lyxose/D-mannose isomerase of Thermosediminibacter oceani (strain ATCC BAA-1034 / DSM 16646 / JW/IW-1228P).